The sequence spans 133 residues: Serine/threonine-protein kinase RsbT (133 aa).

It catalyses the reaction L-seryl-[protein] + ATP = O-phospho-L-seryl-[protein] + ADP + H(+). It carries out the reaction L-threonyl-[protein] + ATP = O-phospho-L-threonyl-[protein] + ADP + H(+). Functionally, provides the crucial link between the upstream module (communication of environmental stress) and the downstream module (integration of the environmental signals with signals of energy stress) that compose the signal transduction pathway controlling the sigma-B factor. Phosphorylates and inactivates its specific antagonist protein RsbS thanks to its serine kinase activity. Upon phosphorylation of RsbS, RsbT is released to stimulate RsbU, a PP2C phosphatase, thereby initiating the signaling cascade that ultimately activates sigma-B. The activity of the RsbU phosphatase may be stimulated by a long-lived interaction with RsbT and the serine kinase function of RsbT is not required to directly modify RsbU. Also phosphorylates RsbR thanks to its threonine kinase activity, preventing it to phosphorylate RsbT. In Bacillus subtilis (strain 168), this protein is Serine/threonine-protein kinase RsbT (rsbT).